Reading from the N-terminus, the 288-residue chain is Acetyl-coenzyme A carboxylase carboxyl transferase subunit beta (288 aa).

The 255-residue stretch at Leu34 to Gln288 folds into the CoA carboxyltransferase N-terminal domain. Zn(2+) contacts are provided by Cys38, Cys41, Cys56, and Cys59. A C4-type zinc finger spans residues Cys38–Cys59.

It belongs to the AccD/PCCB family. Acetyl-CoA carboxylase is a heterohexamer composed of biotin carboxyl carrier protein (AccB), biotin carboxylase (AccC) and two subunits each of ACCase subunit alpha (AccA) and ACCase subunit beta (AccD). Zn(2+) is required as a cofactor.

It localises to the cytoplasm. It carries out the reaction N(6)-carboxybiotinyl-L-lysyl-[protein] + acetyl-CoA = N(6)-biotinyl-L-lysyl-[protein] + malonyl-CoA. It functions in the pathway lipid metabolism; malonyl-CoA biosynthesis; malonyl-CoA from acetyl-CoA: step 1/1. Component of the acetyl coenzyme A carboxylase (ACC) complex. Biotin carboxylase (BC) catalyzes the carboxylation of biotin on its carrier protein (BCCP) and then the CO(2) group is transferred by the transcarboxylase to acetyl-CoA to form malonyl-CoA. This chain is Acetyl-coenzyme A carboxylase carboxyl transferase subunit beta, found in Streptococcus thermophilus (strain ATCC BAA-491 / LMD-9).